Reading from the N-terminus, the 312-residue chain is MILEIPHIPVLLNEVQEIFKNLKTGYFLDCTLGFGGHSEALLKNHPDLKFIACDQDQQALKFSKKRLKDFRNRITFMQSNFSEVLEKISHKEELRGILADIGVSSFQLDNNERGFSVNSDFLDMRMNQNSKISAYEIINTYTKEQLTSIFKDYGELHDAHFIAEKICLERSKNLIKSAKELYQIIGKGKQNHRKISKATLAFQAIRIEVNQELKVLKDFLEHLENLKPKNCILAIISFHSLEDRIVKQFFKKWSKNCICNEKIMRCECGNNHSLGQIITKKAISASKEELLKNSRSSCAKMRAFYFNNLDNK.

S-adenosyl-L-methionine is bound by residues 35–37 (GGH), Asp-54, Phe-81, Asp-100, and Gln-107.

This sequence belongs to the methyltransferase superfamily. RsmH family.

Its subcellular location is the cytoplasm. The catalysed reaction is cytidine(1402) in 16S rRNA + S-adenosyl-L-methionine = N(4)-methylcytidine(1402) in 16S rRNA + S-adenosyl-L-homocysteine + H(+). Specifically methylates the N4 position of cytidine in position 1402 (C1402) of 16S rRNA. The sequence is that of Ribosomal RNA small subunit methyltransferase H from Campylobacter jejuni subsp. jejuni serotype O:2 (strain ATCC 700819 / NCTC 11168).